A 586-amino-acid chain; its full sequence is Transmembrane protease serine 13 (586 aa).

Disordered stretches follow at residues 1-115 and 131-157; these read MERD…VTTS and PIRS…LPKF. Residues 1–165 lie on the Cytoplasmic side of the membrane; that stretch reads MERDSHGNAS…KFTWREGQKQ (165 aa). A 1-1 repeat occupies 9–13; it reads ASPAR. The interval 9-93 is 13 X 5 AA repeats of A-S-P-A-[GLQR]; sequence ASPARTPSAG…ASPARASPAL (85 aa). One copy of the 2-1; approximate repeat lies at 14 to 18; sequence TPSAG. Residues 14 to 52 are compositionally biased toward low complexity; it reads TPSAGASPAQASPAGTPPGRASPAQASPAQASPAGTPPG. A 4 X 5 AA repeats of T-P-P-G-R region spans residues 14–68; it reads TPSAGASPAQASPAGTPPGRASPAQASPAQASPAGTPPGRASPAQASPAGTPPGR. 10 repeat units span residues 19 to 23, 24 to 28, 29 to 33, 34 to 38, 39 to 43, 44 to 48, 49 to 53, 54 to 58, 59 to 63, and 64 to 68. Residues 69–78 form a 1-9; approximate repeat; it reads ASPGRASPAQ. Composition is skewed to low complexity over residues 69-111 and 133-144; these read ASPG…RSAS and RSSPARSAPATR. 3 repeat units span residues 79-83, 84-88, and 89-93. Residues 166–186 traverse the membrane as a helical; Signal-anchor for type II membrane protein segment; it reads LPLIGCVLLLIALVVSLIILF. The Extracellular portion of the chain corresponds to 187 to 586; the sequence is QFWQGHTGIR…GGDPGGAPRL (400 aa). The 131-residue stretch at 195–325 folds into the SRCR domain; it reads IRYKEQRESC…HCGLRAMTGR (131 aa). In terms of domain architecture, LDL-receptor class A spans 204-226; the sequence is CPKHAVRCDGVVDCKLKSDELGC. 3 cysteine pairs are disulfide-bonded: C250–C314, C263–C317, and C351–C367. N-linked (GlcNAc...) asparagine glycans are attached at residues N255 and N292. In terms of domain architecture, Peptidase S1 spans 326–559; the sequence is IVGGALASDS…VLPWIYSKME (234 aa). H366 (charge relay system) is an active-site residue. N-linked (GlcNAc...) asparagine glycosylation is present at N405. D414 (charge relay system) is an active-site residue. The N-linked (GlcNAc...) asparagine glycan is linked to N445. Intrachain disulfides connect C448–C517, C480–C496, and C507–C535. S511 acts as the Charge relay system in catalysis. Polar residues predominate over residues 565-574; that stretch reads QDTAPSRLGT. A disordered region spans residues 565–586; it reads QDTAPSRLGTSSGGDPGGAPRL. Over residues 575-586 the composition is skewed to gly residues; that stretch reads SSGGDPGGAPRL.

It belongs to the peptidase S1 family. As to quaternary structure, interacts with SPINT1/HAI-1; the interaction promotes the phosphorylation and cell membrane localization of TMPRSS13. Interacts with SPINT2/HAI-2; the interaction promotes the phosphorylation and cell membrane localization of TMPRSS13. The inactive zymogen is post-translationally modified and then trafficked to the cell surface, whereby it undergoes autocatalytic cleavage resulting in an activated form that is released extracellularly. Post-translationally, phosphorylation is required for localization at the cell surface. Phosphorylation increases following inhibition of protease activity by SPINT2/HAI-2. In terms of processing, N-glycosylation of Asn-405 and Asn-445 is required for exit from the endoplasmic reticulum and trafficking to the cell surface. Also required for autocleavage of the zymogen, activation and secretion of the mature protein. As to expression, expressed in placenta. Predominantly expressed in lung, placenta, pancreas, and prostate. In terms of tissue distribution, expressed in lung, placenta, pancreas, and prostate. Weakly expressed in testis and peripheral blood lymphocytes.

The protein localises to the cell membrane. It is found in the secreted. Its subcellular location is the cytoplasm. With respect to regulation, cleavage of HGF is inhibited by SPINT1/HAI-1 via the BPTI/Kunitz inhibitor 1 domain. In terms of biological role, serine protease. Cleaves the proform of PRSS8/prostasin to form the active protein. Cleaves the proform of HGF to form the active protein which promotes MAPK signaling. Promotes the formation of the stratum corneum and subsequently the epidermal barrier in embryos. The protein is Transmembrane protease serine 13 (TMPRSS13) of Homo sapiens (Human).